A 571-amino-acid chain; its full sequence is GABA-specific permease (571 aa).

Residues 1–73 are Cytoplasmic-facing; that stretch reads MSMSSKNENK…IGYKQELKRQ (73 aa). A helical membrane pass occupies residues 74-94; sequence FSTLQVFGIAFSIMGLLPSIA. Over 95 to 105 the chain is Vacuolar; sequence SVMGGGLGGGP. A helical transmembrane segment spans residues 106–126; the sequence is ATLVWGWFVAAFFILLVGITM. Topologically, residues 127-153 are cytoplasmic; it reads AEHASSIPTAGGLYYWTYYYAPEGYKE. A helical membrane pass occupies residues 154–174; sequence IISFIIGCSNSLALAAGVCSI. Residues 175–198 are Vacuolar-facing; the sequence is DYGLAEEIAAAVTLTKDGNFEVTS. A helical membrane pass occupies residues 199-219; sequence GKLYGIFAGAVVVMCICTCVA. The Cytoplasmic portion of the chain corresponds to 220–228; the sequence is SGAIARLQT. A helical transmembrane segment spans residues 229 to 249; that stretch reads LSIFANLFIIVLLFIALPIGT. Topologically, residues 250–271 are vacuolar; it reads KHRMGGFNDGDFIFGKYENLSD. The helical transmembrane segment at 272 to 292 threads the bilayer; that stretch reads WNNGWQFCLAGFMPAVWTIGS. Over 293 to 312 the chain is Cytoplasmic; it reads FDSCVHQSEEAKDAKKSVPI. Residues 313 to 333 traverse the membrane as a helical segment; sequence GIISSIAVCWILGWLIIICLM. Topologically, residues 334 to 364 are vacuolar; sequence ACINPDIDSVLDSKYGFALAQIIYDSLGKKW. The helical transmembrane segment at 365–385 threads the bilayer; the sequence is AIAFMSLIAFCQFLMGASITT. Over 386–416 the chain is Cytoplasmic; that stretch reads AVSRQVWAFSRDNGLPLSKYIKRVDSKYSVP. Residues 417-437 form a helical membrane-spanning segment; sequence FFAILAACVGSLILGLLCLID. Topologically, residues 438–441 are vacuolar; that stretch reads DAAT. A helical membrane pass occupies residues 442 to 462; that stretch reads DALFSLAVAGNNLAWSTPTVF. Topologically, residues 463-482 are cytoplasmic; that stretch reads RLTSGRDLFRPGPFYLGKIW. The helical transmembrane segment at 483–503 threads the bilayer; that stretch reads SPIVAWTGVAFQLFIIILVMF. Residues 504–514 are Vacuolar-facing; the sequence is PSQQHGITKST. The helical transmembrane segment at 515-535 threads the bilayer; it reads MNYACVIGPGIWILAGIYYKV. The Cytoplasmic segment spans residues 536–571; that stretch reads YKKKYYHGPATNLSDDDYTEAVGADVIDTIMSKQEP.

This sequence belongs to the amino acid-polyamine-organocation (APC) superfamily. Amino acid/choline transporter (ACT) (TC 2.A.3.4) family.

Its subcellular location is the vacuole membrane. Its function is as follows. Required for high-affinity, high-specificity GABA transport. Also transports putrescine. The chain is GABA-specific permease (UGA4) from Saccharomyces cerevisiae (strain ATCC 204508 / S288c) (Baker's yeast).